A 269-amino-acid polypeptide reads, in one-letter code: Chymotrypsin-like elastase family member 2A (269 aa).

An N-terminal signal peptide occupies residues 1–16 (MIRTLLLSTLVAGALS). The propeptide at 17-28 (CGDPTYPPYVTR) is activation peptide. The 239-residue stretch at 29-267 (VVGGEEARPN…YIDWINSVIA (239 aa)) folds into the Peptidase S1 domain. C58 and C74 are joined by a disulfide. Residues H73 and D121 each act as charge relay system in the active site. 3 disulfides stabilise this stretch: C155-C222, C186-C202, and C212-C243. Residue S216 is the Charge relay system of the active site.

It belongs to the peptidase S1 family. Elastase subfamily. In terms of assembly, interacts with CPA1. Interacts with SERPINA1. In terms of tissue distribution, expressed in pancreas. Not detected in keratinocytes. Detected in exocrine secretions of the pancreas (at protein level). Also expressed in a small fraction of cells in pancreatic islets, adrenal cortex, intestinal glands and colonic lymphoid follicles (at protein level). Detected in plasma.

Its subcellular location is the secreted. The enzyme catalyses Preferential cleavage: Leu-|-Xaa, Met-|-Xaa and Phe-|-Xaa. Hydrolyzes elastin.. Functionally, elastase that enhances insulin signaling and might have a physiologic role in cellular glucose metabolism. Circulates in plasma and reduces platelet hyperactivation, triggers both insulin secretion and degradation, and increases insulin sensitivity. The chain is Chymotrypsin-like elastase family member 2A from Homo sapiens (Human).